We begin with the raw amino-acid sequence, 172 residues long: Translationally-controlled tumor protein homolog (172 aa).

One can recognise a TCTP domain in the interval 1–172; sequence MIIYRDCISQ…FKDGLEMEKC (172 aa).

Belongs to the TCTP family. In terms of tissue distribution, expressed by the venom gland.

Its subcellular location is the secreted. Functionally, venom protein that causes edema, enhances vascular permeability and is likely related to the inflammatory activity of the venom. In Crotalus adamanteus (Eastern diamondback rattlesnake), this protein is Translationally-controlled tumor protein homolog.